Here is a 449-residue protein sequence, read N- to C-terminus: Trigger factor (449 aa).

One can recognise a PPIase FKBP-type domain in the interval 173 to 258 (GDRVTLDFVG…LKKVEWAHLP (86 aa)).

The protein belongs to the FKBP-type PPIase family. Tig subfamily.

The protein resides in the cytoplasm. It carries out the reaction [protein]-peptidylproline (omega=180) = [protein]-peptidylproline (omega=0). In terms of biological role, involved in protein export. Acts as a chaperone by maintaining the newly synthesized protein in an open conformation. Functions as a peptidyl-prolyl cis-trans isomerase. The sequence is that of Trigger factor from Cupriavidus metallidurans (strain ATCC 43123 / DSM 2839 / NBRC 102507 / CH34) (Ralstonia metallidurans).